Reading from the N-terminus, the 1550-residue chain is DNA excision repair protein ERCC-6-like 2 (1550 aa).

The interval 1–23 is disordered; it reads MDPSAPQPRAETSGKDIWHPGER. A compositionally biased stretch (basic and acidic residues) spans 12–22; it reads TSGKDIWHPGE. A Helicase ATP-binding domain is found at 135–321; that stretch reads YGHYIHGGGC…WCVMDWAVPG (187 aa). 148–155 provides a ligand contact to ATP; that stretch reads DDMGLGKT. Positions 272–275 match the DEAH box motif; the sequence is DEAH. In terms of domain architecture, Helicase C-terminal spans 512-662; it reads VLQQLLNHCR…CVVVGSENAK (151 aa). The Atypical PIP-box motif lies at 785–796; sequence PGQLTLLQCGFS. Disordered stretches follow at residues 808-848, 914-1002, and 1354-1410; these read DSDG…TSKH, FPDN…SSLR, and AETK…TRTG. Composition is skewed to basic and acidic residues over residues 830 to 840 and 933 to 953; these read EAKDAGCEKNQ and TEHT…DKRN. A phosphoserine mark is found at Ser980 and Ser983. Over residues 992–1002 the composition is skewed to basic residues; sequence SRVRKRASSLR. Polar residues predominate over residues 1359–1388; that stretch reads SPVSSTQEIDSGKNSQASEDTVTSRSLNSE. Ser1373 and Ser1376 each carry phosphoserine. The span at 1389–1405 shows a compositional bias: basic and acidic residues; sequence SETRERRLENTMKDQQD.

This sequence belongs to the SNF2/RAD54 helicase family. Interacts with NEK6. Interacts (via an atypical PIP-box) with PCNA; this interaction facilitates cenrtomeric localization of ERCC6L2. Interacts with CYREN; this interaction is DNA independent. Interacts with XRCC6 and XRCC5. In terms of processing, phosphorylated by NEK6. Expressed in bone marrow (at protein level).

The protein resides in the nucleus. It localises to the cytoplasm. The protein localises to the cytoskeleton. Its subcellular location is the microtubule organizing center. It is found in the centrosome. The protein resides in the mitochondrion. It localises to the chromosome. The protein localises to the centromere. Its function is as follows. Promotes double-strand break (DSB) end-joining and facilitates programmed recombination by controlling how DNA ends are joined in a spatially oriented manner during repair. Also plays a role in DNA repair by restricting DNA end resection in double strand break (DSB) repair. Facilitates replication of complex DNA regions and regulates the maintenance of chromatin structure. In Homo sapiens (Human), this protein is DNA excision repair protein ERCC-6-like 2.